Reading from the N-terminus, the 134-residue chain is Mini-ribonuclease 3 (134 aa).

The active site involves D23.

It belongs to the MrnC RNase family. As to quaternary structure, homodimer. Requires Mg(2+) as cofactor.

It is found in the cytoplasm. Functionally, involved in correct processing of both the 5' and 3' ends of 23S rRNA precursor. Processes 30S rRNA precursor transcript even in absence of ribonuclease 3 (Rnc); Rnc processes 30S rRNA into smaller rRNA precursors. This chain is Mini-ribonuclease 3, found in Brevibacillus brevis (strain 47 / JCM 6285 / NBRC 100599).